A 787-amino-acid polypeptide reads, in one-letter code: Glycine-rich domain-containing protein 2 (787 aa).

Expressed in leaves, inflorescences, buds, flowers and immature siliques.

Its function is as follows. Involved in development and stress responses, probably through an auxin-dependent mechanism. The polypeptide is Glycine-rich domain-containing protein 2 (Arabidopsis thaliana (Mouse-ear cress)).